A 63-amino-acid polypeptide reads, in one-letter code: Synergistic-type venom protein C9S3, chain 2 (63 aa).

Disulfide bonds link cysteine 3/cysteine 24, cysteine 17/cysteine 42, and cysteine 46/cysteine 57.

The protein belongs to the three-finger toxin family. Short-chain subfamily. Aminergic toxin sub-subfamily. Heterodimer of C9S3 chain 1 (AC P01408) and chain 2, linked by at least two disulfide bonds. Expressed by the venom gland.

It localises to the secreted. In terms of biological role, this protein shows a synergetic toxic effect in that it enhances the toxicity of other D.angusticeps toxins. This is Synergistic-type venom protein C9S3, chain 2 from Dendroaspis angusticeps (Eastern green mamba).